Reading from the N-terminus, the 510-residue chain is Glycogen synthase (510 aa).

K18 contacts ADP-alpha-D-glucose.

This sequence belongs to the glycosyltransferase 1 family. Bacterial/plant glycogen synthase subfamily.

It carries out the reaction [(1-&gt;4)-alpha-D-glucosyl](n) + ADP-alpha-D-glucose = [(1-&gt;4)-alpha-D-glucosyl](n+1) + ADP + H(+). The protein operates within glycan biosynthesis; glycogen biosynthesis. Synthesizes alpha-1,4-glucan chains using ADP-glucose. The chain is Glycogen synthase from Bordetella bronchiseptica (strain ATCC BAA-588 / NCTC 13252 / RB50) (Alcaligenes bronchisepticus).